We begin with the raw amino-acid sequence, 139 residues long: uncharacterized protein (139 aa).

This is an uncharacterized protein from Caenorhabditis elegans.